The sequence spans 267 residues: NAD kinase 2 (267 aa).

Aspartate 52 functions as the Proton acceptor in the catalytic mechanism. NAD(+) is bound by residues 52-53 (DA), 124-125 (NE), arginine 151, aspartate 153, 164-169 (TAYNKS), and alanine 188.

It belongs to the NAD kinase family. Requires a divalent metal cation as cofactor.

It is found in the cytoplasm. The enzyme catalyses NAD(+) + ATP = ADP + NADP(+) + H(+). Involved in the regulation of the intracellular balance of NAD and NADP, and is a key enzyme in the biosynthesis of NADP. Catalyzes specifically the phosphorylation on 2'-hydroxyl of the adenosine moiety of NAD to yield NADP. This Bacillus cereus (strain ATCC 14579 / DSM 31 / CCUG 7414 / JCM 2152 / NBRC 15305 / NCIMB 9373 / NCTC 2599 / NRRL B-3711) protein is NAD kinase 2.